Consider the following 471-residue polypeptide: 3-isopropylmalate dehydratase large subunit (471 aa).

[4Fe-4S] cluster-binding residues include Cys347, Cys407, and Cys410.

It belongs to the aconitase/IPM isomerase family. LeuC type 1 subfamily. In terms of assembly, heterodimer of LeuC and LeuD. Requires [4Fe-4S] cluster as cofactor.

The catalysed reaction is (2R,3S)-3-isopropylmalate = (2S)-2-isopropylmalate. The protein operates within amino-acid biosynthesis; L-leucine biosynthesis; L-leucine from 3-methyl-2-oxobutanoate: step 2/4. In terms of biological role, catalyzes the isomerization between 2-isopropylmalate and 3-isopropylmalate, via the formation of 2-isopropylmaleate. This chain is 3-isopropylmalate dehydratase large subunit, found in Geobacillus thermodenitrificans (strain NG80-2).